Consider the following 993-residue polypeptide: Synaptonemal complex protein 1 (993 aa).

A Mediates head to head self-assembly of N-terminal ends motif is present at residues 98 to 108 (PMSRLYSKLYK). Positions 114-117 (KKWK) match the Nuclear localization signal motif. 2 coiled-coil regions span residues 117-172 (KVSI…LIKE) and 215-688 (IEKM…EIEN). Residues 203 to 359 (ETRQVYVDLN…SQLTEVKEAQ (157 aa)) form an interaction with SYCE3 region. The tract at residues 694-788 (GKLLGEVEKA…VSLKKQLEIE (95 aa)) is required for pH-induced assembly of C-terminal ends into antiparallel tetramers. Positions 697 to 700 (LGEV) match the Nuclear localization signal motif. Residues 764 to 808 (KIALETELSNIRNELVSLKKQLEIEKEEKEKLKMAKENTAILKDK) adopt a coiled-coil conformation. Residues 801-993 (NTAILKDKKD…RLKEAEKLFS (193 aa)) form a DNA-binding region. Serine 820 carries the post-translational modification Phosphoserine. The segment at 824-861 (TSWKFDSKTTPSQNISRLSSSMDSGKSKDNRDNLRASA) is disordered. Positions 831 to 847 (KTTPSQNISRLSSSMDS) are enriched in polar residues. Basic and acidic residues predominate over residues 848–857 (GKSKDNRDNL). A Nuclear localization signal motif is present at residues 898–901 (KKRK).

As to quaternary structure, structural component of synaptonemal complexes. Homotetramer that consists of an N-terminal four-helical bundle that bifurcates into two elongated C-terminal dimeric coiled coils. This tetrameric building block potentially self-assembles into a supramolecular zipper-like lattice to mediate meiotic chromosome synapsis. Self-assembly is likely initiated by local proton density at chromosome axis, which is predicted to trigger antiparallel back to back assembly of adjacent C-terminal ends into tetrameric structures that anchor to chromosomal DNA. Then the N-terminal ends are predicted to undergo cooperative antiparallel head to head assembly at the midline of synaptonemal complexes central element to form a zipper-like lattice between properly aligned homologous chromosomes. The nascent synapsis generated by SYCP1 is stabilized through interaction with central element proteins SYCE1 and SYCE2. Interacts (via tetrameric core) with SYCE3; the interaction remodels SYCP1 homotetramers to 2:1 heterotrimers with SYCE3. SYCP1/SYCE3 heterotrimers form lattice assemblies as part of the mature synaptonemal complex via both lateral and head-to-head interactions. Forms a complex with EWSR1, PRDM9, SYCP3 and REC8; complex formation is dependent of phosphorylated form of REC8 and requires PRDM9 bound to hotspot DNA; EWSR1 joins PRDM9 with the chromosomal axis through REC8. Interacts with SPO16. As to expression, detected in testis. Detected in spermatocytes (at protein level).

The protein resides in the nucleus. It is found in the chromosome. Its subcellular location is the centromere. Functionally, major component of the transverse filaments of synaptonemal complexes, formed between homologous chromosomes during meiotic prophase. Required for normal assembly of the central element of the synaptonemal complexes. Required for normal centromere pairing during meiosis. Required for normal meiotic chromosome synapsis during oocyte and spermatocyte development and for normal male and female fertility. The polypeptide is Synaptonemal complex protein 1 (Mus musculus (Mouse)).